The chain runs to 1316 residues: Myosin-5 (1316 aa).

Residues 1-12 (MAIVKRGGRTKT) show a composition bias toward basic residues. Positions 1-29 (MAIVKRGGRTKTKQQQVPAKSSGGGSSGG) are disordered. Residues 43-731 (VGVSDLTLLS…TLFALEDMRD (689 aa)) enclose the Myosin motor domain. ATP is bound at residue 136-143 (GESGAGKT). Serine 366 bears the Phosphoserine mark. The segment at 414 to 497 (SIGILDIYGF…PGLFAALNDS (84 aa)) is actin-binding. IQ domains follow at residues 735–755 (HNMA…KEDA) and 756–781 (AKTI…YGNG). Residues 789-981 (RRRMSMLGSR…TVSVKQGLPA (193 aa)) form the TH1 domain. Disordered stretches follow at residues 964–1154 (NGDH…PTLV) and 1209–1316 (DYLK…DDDW). Composition is skewed to polar residues over residues 971–984 (GTVS…ASSK) and 1018–1030 (PRYN…ANSG). The segment covering 1042–1065 (QPQQYQPQQSQQQTPYPTQSSIPS) has biased composition (low complexity). A compositionally biased stretch (polar residues) spans 1097-1106 (SPTQQRQTPA). The span at 1117–1129 (ASTTIATTTSHTS) shows a compositional bias: low complexity. Residues 1137 to 1153 (PAPPVKKTAPPPPPPTL) are compositionally biased toward pro residues. The region spanning 1156 to 1216 (PKFPTYKAMF…PIDYLKECSP (61 aa)) is the SH3 domain. Residues 1223–1232 (APPPPPPPPA) are compositionally biased toward pro residues. The segment covering 1233 to 1268 (ATASAGANGASNPISTTTSTNTTTSSHTTNATSNGS) has biased composition (low complexity). Residues 1305–1316 (SDDEEEEDDDDW) show a composition bias toward acidic residues.

Belongs to the TRAFAC class myosin-kinesin ATPase superfamily. Myosin family. In terms of processing, phosphorylation of the TEDS site (Ser-366) is required for the polarization of the actin cytoskeleton. Phosphorylation probably activates the myosin-I ATPase activity.

It is found in the cytoplasm. The protein resides in the cytoskeleton. Its subcellular location is the actin patch. Type-I myosin implicated in the organization of the actin cytoskeleton. Required for proper actin cytoskeleton polarization and for the internalization step in endocytosis. At the cell cortex, assembles in patch-like structures together with proteins from the actin-polymerizing machinery and promotes actin assembly. Functions as actin nucleation-promoting factor (NPF) for the Arp2/3 complex. Plays a role in chitin deposition in the cell wall, in determination of the budding pattern, and is required for hyphae formation. The polypeptide is Myosin-5 (MYO5) (Candida albicans (strain SC5314 / ATCC MYA-2876) (Yeast)).